We begin with the raw amino-acid sequence, 403 residues long: Large ribosomal subunit protein uL3 (403 aa).

The disordered stretch occupies residues 1-37 (MSHRKFSAPRHGSLGFLPRKRSSRHRGKVKSFPKDDP). At serine 13 the chain carries Phosphoserine. Residues 18-31 (PRKRSSRHRGKVKS) are compositionally biased toward basic residues. Lysine 39 is covalently cross-linked (Glycyl lysine isopeptide (Lys-Gly) (interchain with G-Cter in SUMO2)). The residue at position 136 (lysine 136) is an N6-acetyllysine. Glycyl lysine isopeptide (Lys-Gly) (interchain with G-Cter in SUMO2) cross-links involve residues lysine 224 and lysine 226. Position 245 is a tele-methylhistidine (histidine 245). An N6-acetyllysine; alternate mark is found at lysine 286 and lysine 294. A Glycyl lysine isopeptide (Lys-Gly) (interchain with G-Cter in SUMO2); alternate cross-link involves residue lysine 286. A Glycyl lysine isopeptide (Lys-Gly) (interchain with G-Cter in SUMO1); alternate cross-link involves residue lysine 294. Residue serine 304 is modified to Phosphoserine. The residue at position 366 (lysine 366) is an N6-acetyllysine; alternate. Lysine 366 participates in a covalent cross-link: Glycyl lysine isopeptide (Lys-Gly) (interchain with G-Cter in SUMO2); alternate. Position 373 is an N6-acetyllysine (lysine 373). Residues lysine 386, lysine 393, and lysine 399 each participate in a glycyl lysine isopeptide (Lys-Gly) (interchain with G-Cter in SUMO2) cross-link.

This sequence belongs to the universal ribosomal protein uL3 family. As to quaternary structure, component of the large ribosomal subunit. Interacts with DHX33. Constitutively monomethylated at His-245 by METTL18. Methylation at His-245 regulates translation elongation by slowing ribosome traversal on tyrosine codons: slower elongation provides enough time for proper folding of synthesized proteins and prevents cellular aggregation of tyrosine-rich proteins It is not required for incorporation of RPL3 into ribosomes.

It localises to the nucleus. The protein localises to the nucleolus. It is found in the cytoplasm. Its function is as follows. Component of the large ribosomal subunit. The ribosome is a large ribonucleoprotein complex responsible for the synthesis of proteins in the cell. This Macaca fascicularis (Crab-eating macaque) protein is Large ribosomal subunit protein uL3 (RPL3).